The following is a 204-amino-acid chain: Wound-induced proteinase inhibitor 2 (204 aa).

An N-terminal signal peptide occupies residues 1–25; that stretch reads MAVPKEVSFLASLLVLGILLLHVDA. A run of 3 repeats spans residues 25 to 67, 68 to 125, and 126 to 183. 6 disulfide bridges follow: C28/C100, C38/C75, C41/C59, C42/C71, C48/C84, and C99/C117. One copy of the 4; truncated repeat lies at 184–204; the sequence is PKACPKNCDPNIAYSLCLYEK.

Belongs to the protease inhibitor I20 (potato type II proteinase inhibitor) family.

In Capsicum annuum (Capsicum pepper), this protein is Wound-induced proteinase inhibitor 2 (PIN2).